The following is a 788-amino-acid chain: Patatin-like phospholipase domain-containing protein DEHA2B04136g (788 aa).

The chain crosses the membrane as a helical span at residues 136-156; sequence WPILIFISCWISLLCFMYIIV. Positions 311–503 constitute a PNPLA domain; it reads LCLSGGACFT…RTDIPIDALN (193 aa). The short motif at 342-346 is the GXSXG element; sequence GTSGG. Ser-344 acts as the Nucleophile in catalysis. Asp-490 acts as the Proton acceptor in catalysis. Residues 662–672 are compositionally biased toward polar residues; sequence ANFNTLTSSDS. A disordered region spans residues 662–771; sequence ANFNTLTSSD…DTGSRFLKSF (110 aa). Composition is skewed to acidic residues over residues 690 to 705 and 723 to 749; these read MFDD…DDEV and EDGD…DEAN.

Belongs to the PLPL family.

The protein localises to the membrane. Its function is as follows. Probable lipid hydrolase. This Debaryomyces hansenii (strain ATCC 36239 / CBS 767 / BCRC 21394 / JCM 1990 / NBRC 0083 / IGC 2968) (Yeast) protein is Patatin-like phospholipase domain-containing protein DEHA2B04136g.